A 235-amino-acid chain; its full sequence is uncharacterized protein (235 aa).

This is an uncharacterized protein from Mycoplasma pneumoniae (strain ATCC 29342 / M129 / Subtype 1) (Mycoplasmoides pneumoniae).